The primary structure comprises 433 residues: Histidinol dehydrogenase (433 aa).

NAD(+) contacts are provided by Y129, Q191, and N214. The substrate site is built by S237, Q259, and H262. The Zn(2+) site is built by Q259 and H262. Active-site proton acceptor residues include E326 and H327. Substrate-binding residues include H327, D360, E414, and H419. D360 serves as a coordination point for Zn(2+). Position 419 (H419) interacts with Zn(2+).

This sequence belongs to the histidinol dehydrogenase family. Zn(2+) serves as cofactor.

It carries out the reaction L-histidinol + 2 NAD(+) + H2O = L-histidine + 2 NADH + 3 H(+). Its pathway is amino-acid biosynthesis; L-histidine biosynthesis; L-histidine from 5-phospho-alpha-D-ribose 1-diphosphate: step 9/9. Catalyzes the sequential NAD-dependent oxidations of L-histidinol to L-histidinaldehyde and then to L-histidine. The chain is Histidinol dehydrogenase from Methanosarcina mazei (strain ATCC BAA-159 / DSM 3647 / Goe1 / Go1 / JCM 11833 / OCM 88) (Methanosarcina frisia).